We begin with the raw amino-acid sequence, 192 residues long: Phosphomevalonate kinase (192 aa).

ATP is bound by residues 17 to 23 (KRKSGKD) and arginine 141. Asparagine 170 contacts substrate. 2 residues coordinate ATP: histidine 171 and glutamine 180.

In terms of assembly, monomer.

It is found in the cytoplasm. The protein localises to the cytosol. The catalysed reaction is (R)-5-phosphomevalonate + ATP = (R)-5-diphosphomevalonate + ADP. It functions in the pathway isoprenoid biosynthesis; isopentenyl diphosphate biosynthesis via mevalonate pathway; isopentenyl diphosphate from (R)-mevalonate: step 2/3. Catalyzes the reversible ATP-dependent phosphorylation of mevalonate 5-phosphate to produce mevalonate diphosphate and ADP, a key step in the mevalonic acid mediated biosynthesis of isopentenyl diphosphate and other polyisoprenoid metabolites. The polypeptide is Phosphomevalonate kinase (Pmvk) (Mus musculus (Mouse)).